An 852-amino-acid polypeptide reads, in one-letter code: Metastasis-associated in colon cancer protein 1 (852 aa).

Serine 19 carries the post-translational modification Phosphoserine. Positions valine 212–alanine 349 constitute a ZU5 domain. The SH3 domain occupies asparagine 549–lysine 619.

In terms of assembly, interacts with FASLG. As to expression, preferentially expressed in metastasizing tumors.

The protein resides in the cytoplasm. The protein localises to the nucleus. Functionally, acts as a transcription activator for MET and as a key regulator of HGF-MET signaling. Promotes cell motility, proliferation and hepatocyte growth factor (HGF)-dependent scattering in vitro and tumor growth and metastasis in vivo. In Homo sapiens (Human), this protein is Metastasis-associated in colon cancer protein 1 (MACC1).